The chain runs to 145 residues: Lysozyme-like protein 4 (145 aa).

An N-terminal signal peptide occupies residues M1–T19. Positions A20–L145 constitute a C-type lysozyme domain. 4 disulfides stabilise this stretch: C25/C143, C49/C130, C84/C95, and C91/C109. E54 is an active-site residue.

The protein belongs to the glycosyl hydrolase 22 family. In terms of assembly, monomer.

The protein resides in the secreted. Its subcellular location is the cytoplasmic vesicle. It localises to the secretory vesicle. The protein localises to the acrosome. It is found in the cell projection. The protein resides in the cilium. Its subcellular location is the flagellum. Its function is as follows. May be involved in fertilization. Has no detectable bacteriolytic and lysozyme activities in vitro. The sequence is that of Lysozyme-like protein 4 (LYZL4) from Bos taurus (Bovine).